Consider the following 626-residue polypeptide: MPIRHLSETIINQIAAGEVIERPASVIKELVENAIDAGATRIEVVTGGGGKTLLRVTDNGSGIPVDELPLAVSRHCTSKLSDDVHDIRALGFRGEALPSIGSVAKLTLKSRPQDADSGFEVSVSGGHLDGPRPSALNRGTIAEVRDLFFATPARLKFMKTDRAEASAITDVVKRIAIAFPHVRFSLAGTDRTPLELAATGSGAEATLERINQVLGKEFGENALAIDAERDGVRLAGFVGIPSHNRGNALHQFAYVNGRPVRDKQLFGALRGAYADVMARDRHPVAVLFLTLDPAFVDVNVHPAKADVRFRDPGLVRGLIVGAIKQALAQSGIRPATSGADAMLQAFRAEGFQPPSPSFTSRPSSAGYASGSWHPAVSSPRTEWSPQTAHPAHRPLDLGAAPSFQESDQATLATVNVLAADARATRDEAPVELQQKPLGAARAQIHANYIVSQTEDSLVIVDQHAAHERLVYEALKNALHSRPISGQMLLIPEIVDLPEEDAERLATHAETLARFGLGIEQFGPGAIAVRETPAMLGEMNVQQLIRDLSDEIAEHDTSEGLKAMLNHVAATMACHGSVRSGRRLKPEEMNALLREMEATPGSGTCNHGRPTYIELKLTDIERLFGRR.

Positions 352-399 (QPPSPSFTSRPSSAGYASGSWHPAVSSPRTEWSPQTAHPAHRPLDLGA) are disordered. The segment covering 378–387 (SPRTEWSPQT) has biased composition (polar residues).

The protein belongs to the DNA mismatch repair MutL/HexB family.

This protein is involved in the repair of mismatches in DNA. It is required for dam-dependent methyl-directed DNA mismatch repair. May act as a 'molecular matchmaker', a protein that promotes the formation of a stable complex between two or more DNA-binding proteins in an ATP-dependent manner without itself being part of a final effector complex. In Brucella anthropi (strain ATCC 49188 / DSM 6882 / CCUG 24695 / JCM 21032 / LMG 3331 / NBRC 15819 / NCTC 12168 / Alc 37) (Ochrobactrum anthropi), this protein is DNA mismatch repair protein MutL.